Consider the following 194-residue polypeptide: Orotate phosphoribosyltransferase (194 aa).

Residue 117 to 125 (EDIVSTGLS) participates in 5-phospho-alpha-D-ribose 1-diphosphate binding. Serine 121 and arginine 149 together coordinate orotate.

This sequence belongs to the purine/pyrimidine phosphoribosyltransferase family. PyrE subfamily. Homodimer. Mg(2+) is required as a cofactor.

It carries out the reaction orotidine 5'-phosphate + diphosphate = orotate + 5-phospho-alpha-D-ribose 1-diphosphate. It functions in the pathway pyrimidine metabolism; UMP biosynthesis via de novo pathway; UMP from orotate: step 1/2. Its function is as follows. Catalyzes the transfer of a ribosyl phosphate group from 5-phosphoribose 1-diphosphate to orotate, leading to the formation of orotidine monophosphate (OMP). The polypeptide is Orotate phosphoribosyltransferase (Maricaulis maris (strain MCS10) (Caulobacter maris)).